The chain runs to 230 residues: tRNA pseudouridine synthase B (230 aa).

Residue D45 is the Nucleophile of the active site.

It belongs to the pseudouridine synthase TruB family. Type 1 subfamily.

It catalyses the reaction uridine(55) in tRNA = pseudouridine(55) in tRNA. Its function is as follows. Responsible for synthesis of pseudouridine from uracil-55 in the psi GC loop of transfer RNAs. The chain is tRNA pseudouridine synthase B from Endomicrobium trichonymphae.